A 336-amino-acid polypeptide reads, in one-letter code: Geranylgeranyl pyrophosphate synthase 6, mitochondrial (336 aa).

A mitochondrion-targeting transit peptide spans 1 to 22 (MRPRYSLILSAMRLIRPSNRRL). Positions 80, 83, and 112 each coordinate isopentenyl diphosphate. Positions 119 and 125 each coordinate Mg(2+). R130 contributes to the dimethylallyl diphosphate binding site. R131 is an isopentenyl diphosphate binding site. Residues K221, T222, Q259, K276, and K286 each contribute to the dimethylallyl diphosphate site.

It belongs to the FPP/GGPP synthase family. Monomer. Mg(2+) is required as a cofactor.

It localises to the mitochondrion. The catalysed reaction is isopentenyl diphosphate + dimethylallyl diphosphate = (2E)-geranyl diphosphate + diphosphate. It carries out the reaction isopentenyl diphosphate + (2E)-geranyl diphosphate = (2E,6E)-farnesyl diphosphate + diphosphate. The enzyme catalyses isopentenyl diphosphate + (2E,6E)-farnesyl diphosphate = (2E,6E,10E)-geranylgeranyl diphosphate + diphosphate. It functions in the pathway isoprenoid biosynthesis; farnesyl diphosphate biosynthesis; farnesyl diphosphate from geranyl diphosphate and isopentenyl diphosphate: step 1/1. Its pathway is isoprenoid biosynthesis; geranyl diphosphate biosynthesis; geranyl diphosphate from dimethylallyl diphosphate and isopentenyl diphosphate: step 1/1. It participates in isoprenoid biosynthesis; geranylgeranyl diphosphate biosynthesis; geranylgeranyl diphosphate from farnesyl diphosphate and isopentenyl diphosphate: step 1/1. Catalyzes the trans-addition of the three molecules of IPP onto DMAPP to form geranylgeranyl pyrophosphate. The protein is Geranylgeranyl pyrophosphate synthase 6, mitochondrial of Arabidopsis thaliana (Mouse-ear cress).